The primary structure comprises 196 residues: Imidazoleglycerol-phosphate dehydratase (196 aa).

Belongs to the imidazoleglycerol-phosphate dehydratase family.

Its subcellular location is the cytoplasm. The catalysed reaction is D-erythro-1-(imidazol-4-yl)glycerol 3-phosphate = 3-(imidazol-4-yl)-2-oxopropyl phosphate + H2O. The protein operates within amino-acid biosynthesis; L-histidine biosynthesis; L-histidine from 5-phospho-alpha-D-ribose 1-diphosphate: step 6/9. This is Imidazoleglycerol-phosphate dehydratase from Ralstonia pickettii (strain 12J).